Consider the following 240-residue polypeptide: MLIEHERGFVLHVRAWRETSLLVEVLTEQHGRVGLLARGVQGPRKQALRAALQPLQLIQFSAVQRGELAQLRQAEALDTAPRLVGDTMLAGFYISELLLRLAPRNDPVPELYACYAQARTYLASDLPLAWGLRRFERDVLDGLGFAFDLQHDSDGQPIDPAARYRLDPQEGALRVLSERLAQDRRETVTGAALLALGEDVMPDADDMPGLRRSMRGVLLHHLGGRGLKSWQMLEDLARRR.

It belongs to the RecO family.

Functionally, involved in DNA repair and RecF pathway recombination. The sequence is that of DNA repair protein RecO from Xanthomonas euvesicatoria pv. vesicatoria (strain 85-10) (Xanthomonas campestris pv. vesicatoria).